A 136-amino-acid chain; its full sequence is Large ribosomal subunit protein eL27 (136 aa).

The 32-residue stretch at 5–36 (MKPGKVVLVLRGKYAGRKAVVVKQQDEGVSDR) folds into the KOW domain.

Belongs to the eukaryotic ribosomal protein eL27 family. Component of the large ribosomal subunit.

It is found in the cytoplasm. The protein resides in the cytosol. It localises to the rough endoplasmic reticulum. In terms of biological role, component of the large ribosomal subunit. This is Large ribosomal subunit protein eL27 (rpl-27) from Caenorhabditis elegans.